A 1034-amino-acid polypeptide reads, in one-letter code: Probable isoleucine--tRNA ligase, mitochondrial (1034 aa).

Residues 1-32 (MISLNNSFFNKRVIVNSFNNYKRSFGTKSQNE) constitute a mitochondrion transit peptide. A 'HIGH' region motif is present at residues 94 to 104 (PYANGDLHMGH). The 'KMSKS' region motif lies at 655–659 (KMSKS). Lys658 contributes to the ATP binding site.

Belongs to the class-I aminoacyl-tRNA synthetase family.

The protein resides in the mitochondrion matrix. The catalysed reaction is tRNA(Ile) + L-isoleucine + ATP = L-isoleucyl-tRNA(Ile) + AMP + diphosphate. This is Probable isoleucine--tRNA ligase, mitochondrial (mileS) from Dictyostelium discoideum (Social amoeba).